The following is a 491-amino-acid chain: MAKFIMVVGTASNSGKTVLVSGICRMLVNQGYKVAPFKSQNMSLNSRVSVEDGEIAVAQYTQAIAAKVNPSIHFNPVLLKPKGNFISQVIVHGKPYKDMDYNEYRKEKNYFLEKIKESIEYLDKNYDYVVIEGAGSCCEINLLNDDIANLKVAELSNADAILVSDIDRGGVFASIYGTVNLLPENWKKLLKGFVINKFRGNIDVLKDGFEKIEELTNIPVIGTIPYDETLVLPEEDSQAIQGKKVFGNLKSPVEVNIVKFSKIANFTDLDPLSNDCLMKYIDFNDDITGDILILPGTRCSTVEMNLMKKYGLDKKIHEFINKGGIIFGICGGYQTLGKILIDENFSEGNVGTISGLDVFNMETTFGNKKAINNSNGILKINDMEYEVSGYELHEGYSVSKETPLITLSNGFGNLGDMYDGSFKQIENSYIFGTYLHGILENFEFRNYLVNLVLSKKNLKNISKDNYEKVLQENMDKLSKIIEESIDFSKIL.

Positions 252-444 constitute a GATase cobBQ-type domain; the sequence is PVEVNIVKFS…LHGILENFEF (193 aa). C330 acts as the Nucleophile in catalysis. The active site involves H436.

It belongs to the CobB/CobQ family. CobQ subfamily.

Its pathway is cofactor biosynthesis; adenosylcobalamin biosynthesis. Functionally, catalyzes amidations at positions B, D, E, and G on adenosylcobyrinic A,C-diamide. NH(2) groups are provided by glutamine, and one molecule of ATP is hydrogenolyzed for each amidation. The sequence is that of Probable cobyric acid synthase from Methanococcus vannielii (strain ATCC 35089 / DSM 1224 / JCM 13029 / OCM 148 / SB).